We begin with the raw amino-acid sequence, 408 residues long: tRNA-specific 2-thiouridylase MnmA (408 aa).

Residues 27-34 and Leu53 each bind ATP; that span reads AMSGGVDS. Cys121 functions as the Nucleophile in the catalytic mechanism. A disulfide bridge connects residues Cys121 and Cys222. ATP is bound at residue Gly145. The tract at residues 172–174 is interaction with tRNA; sequence RDQ. Cys222 (cysteine persulfide intermediate) is an active-site residue.

Belongs to the MnmA/TRMU family.

The protein localises to the cytoplasm. It catalyses the reaction S-sulfanyl-L-cysteinyl-[protein] + uridine(34) in tRNA + AH2 + ATP = 2-thiouridine(34) in tRNA + L-cysteinyl-[protein] + A + AMP + diphosphate + H(+). Functionally, catalyzes the 2-thiolation of uridine at the wobble position (U34) of tRNA, leading to the formation of s(2)U34. This is tRNA-specific 2-thiouridylase MnmA from Rhizobium etli (strain ATCC 51251 / DSM 11541 / JCM 21823 / NBRC 15573 / CFN 42).